The following is a 1266-amino-acid chain: Formin-like protein 13 (1266 aa).

Residues 9–193 (YRKPPDGLLE…QYVSRRNLVS (185 aa)) enclose the Phosphatase tensin-type domain. Catalysis depends on Cys126, which acts as the Phosphocysteine intermediate. The 139-residue stretch at 199–337 (DRALTMDCVI…FRVELLFSDM (139 aa)) folds into the C2 tensin-type domain. Disordered regions lie at residues 497–568 (KPLV…LQHS), 597–825 (KNLI…GKGR), 881–902 (SASA…PKPE), and 1210–1266 (QLEA…RTAP). The segment covering 529-538 (PPTPSPPHPV) has biased composition (pro residues). Over residues 617–644 (EPSSKTTNSLLLSPQASPATPTNPSKTV) the composition is skewed to polar residues. Composition is skewed to pro residues over residues 686-698 (LPRP…PPPM), 706-742 (VPPP…PPTP), 754-781 (PPAP…PPPL), and 806-815 (PNVPPTPALP). The 398-residue stretch at 829–1226 (VNLKNSPAKK…KNAAEKEKPK (398 aa)) folds into the FH2 domain. 3 stretches are compositionally biased toward basic and acidic residues: residues 889 to 902 (GKSR…PKPE), 1210 to 1248 (QLEA…EKTK), and 1255 to 1266 (EMSDRLKERTAP).

Belongs to the formin-like family. Class-II subfamily.

This Arabidopsis thaliana (Mouse-ear cress) protein is Formin-like protein 13 (FH13).